The primary structure comprises 113 residues: MIIIKTKNREYTIDENKEINSISAADTICPYRAYRSYHRKIPIKIDDCKEARKIAGSMTHYVILRQLKEQGCETEKIVDPELKFRADAICDGDALLRLRQTSIGTGMRLISGN.

It localises to the virion. This chain is Coat protein TP1, found in Thermoproteus tenax virus 1 (strain KRA1) (TTV1).